We begin with the raw amino-acid sequence, 464 residues long: MHMDDFSASLGFTDRSSRGILDTIEMIEKYRLDIRTVTMGISLLECARGSMEETATAVYDRVTSQAARLVEVCEGIERELGIPIVNKRISVTPIALVTAGCSGDPVDVARALDKAAKDVGVNFIGGYSALVEKGGTTSDIRLIRSIPEALSTTDVVCGSVNVASSRAGINMNAVNEMGKVVKQAAELTKDRSAIACAKLVVFANSVGDNPFMAGAFHGIEEPDCVVSVGVSGPGVVSRALGNLQGATLDQVAEEIKKAAFKITRTGQLVGAMASERLGVPFGIVDLSLAPTAEVGDSVANILEVMGLDQVGTHGTTAALALLNDAVKKGGMMACSRVGGLSGSFIPVSEDKGMIDAVRTGAISIDKLEAMTAICSVGLDMIAIPGDTPAETISGMIADEAAIGVMNHKTTAVRVIPVPGTVPGDEVDFGGLLGYAPVIPVNTVGNSEFIHRGGFIPAPVHGFRN.

This sequence belongs to the UPF0210 family. In terms of assembly, homodimer.

This chain is UPF0210 protein Cgl1545/cg1743, found in Corynebacterium glutamicum (strain ATCC 13032 / DSM 20300 / JCM 1318 / BCRC 11384 / CCUG 27702 / LMG 3730 / NBRC 12168 / NCIMB 10025 / NRRL B-2784 / 534).